The chain runs to 113 residues: MGCNVMMELDYGGRAAWLAFHITNFDRSDLETILRGARVCNTWQDQRLSVYLVGRDCNLLRPFVQAAKFIHNTRRGQTLTHWFTKNIVFSSTGQETEPPIDPTCELLVELISG.

The protein belongs to the pneumovirus non-structural protein 1 family.

The protein resides in the host cytoplasm. Its subcellular location is the host mitochondrion. May play a minor role in antagonizing the type I IFN-mediated antiviral response. Additionally, NS1 may serve some inhibitory role in viral transcription and RNA replication. This Mus musculus (Mouse) protein is Non-structural protein 1 (1C).